The chain runs to 347 residues: Quinolinate synthase (347 aa).

The iminosuccinate site is built by His-47 and Ser-68. Cys-113 serves as a coordination point for [4Fe-4S] cluster. Residues 139–141 (YAN) and Ser-156 contribute to the iminosuccinate site. Residue Cys-200 participates in [4Fe-4S] cluster binding. Iminosuccinate-binding positions include 226–228 (HPE) and Thr-243. Cys-297 is a binding site for [4Fe-4S] cluster.

The protein belongs to the quinolinate synthase family. Type 1 subfamily. [4Fe-4S] cluster serves as cofactor.

The protein resides in the cytoplasm. It catalyses the reaction iminosuccinate + dihydroxyacetone phosphate = quinolinate + phosphate + 2 H2O + H(+). It participates in cofactor biosynthesis; NAD(+) biosynthesis; quinolinate from iminoaspartate: step 1/1. In terms of biological role, catalyzes the condensation of iminoaspartate with dihydroxyacetone phosphate to form quinolinate. This Salmonella enteritidis PT4 (strain P125109) protein is Quinolinate synthase.